A 344-amino-acid chain; its full sequence is RNA 3'-terminal phosphate cyclase (344 aa).

ATP-binding positions include Q103 and H283–Q287. Catalysis depends on H308, which acts as the Tele-AMP-histidine intermediate.

Belongs to the RNA 3'-terminal cyclase family. Type 1 subfamily.

The protein resides in the cytoplasm. It catalyses the reaction a 3'-end 3'-phospho-ribonucleotide-RNA + ATP = a 3'-end 2',3'-cyclophospho-ribonucleotide-RNA + AMP + diphosphate. Catalyzes the conversion of 3'-phosphate to a 2',3'-cyclic phosphodiester at the end of RNA. The mechanism of action of the enzyme occurs in 3 steps: (A) adenylation of the enzyme by ATP; (B) transfer of adenylate to an RNA-N3'P to produce RNA-N3'PP5'A; (C) and attack of the adjacent 2'-hydroxyl on the 3'-phosphorus in the diester linkage to produce the cyclic end product. The biological role of this enzyme is unknown but it is likely to function in some aspects of cellular RNA processing. This Salmonella agona (strain SL483) protein is RNA 3'-terminal phosphate cyclase.